Here is a 236-residue protein sequence, read N- to C-terminus: Eukaryotic translation initiation factor 3 subunit K (236 aa).

The 181-residue stretch at 42 to 222 (YDKDILVTTL…TIKSRNIEEK (181 aa)) folds into the PCI domain.

The protein belongs to the eIF-3 subunit K family. In terms of assembly, component of the eukaryotic translation initiation factor 3 (eIF-3) complex.

It is found in the cytoplasm. Functionally, component of the eukaryotic translation initiation factor 3 (eIF-3) complex, which is involved in protein synthesis of a specialized repertoire of mRNAs and, together with other initiation factors, stimulates binding of mRNA and methionyl-tRNAi to the 40S ribosome. The eIF-3 complex specifically targets and initiates translation of a subset of mRNAs involved in cell proliferation. This is Eukaryotic translation initiation factor 3 subunit K from Brugia malayi (Filarial nematode worm).